Consider the following 458-residue polypeptide: Tyrosine phenol-lyase (458 aa).

Lysine 258 is subject to N6-(pyridoxal phosphate)lysine.

The protein belongs to the beta-eliminating lyase family. In terms of assembly, homotetramer. The cofactor is pyridoxal 5'-phosphate.

It catalyses the reaction L-tyrosine + H2O = phenol + pyruvate + NH4(+). The chain is Tyrosine phenol-lyase (tpl) from Symbiobacterium sp. (strain SC-1).